A 619-amino-acid polypeptide reads, in one-letter code: Putative zinc transporter At3g08650 (619 aa).

15 helical membrane-spanning segments follow: residues 25-45, 102-122, 129-149, 155-175, 198-218, 230-250, 261-281, 289-309, 354-374, 383-403, 405-425, 465-485, 528-548, 552-572, and 585-605; these read MMHSSCKGLVLLLFLFVVVFI, VALFTLAMAAATGLGAVPFFF, WAGICNGMAAGVMLAASFDLV, HGSGNWVVTGILAGALFIWLC, VVLVIGIMTLHSFGEGSGVGV, LLVTLAIAVHNIPEGLAVSMV, AMLWSIITSLPQPLVAVPAFL, FLPFCTGFAAGCMIWMVIAEV, GFFVSLLFGLGPLLGGVFLVA, HALLMGVASGIAFVLGLWRPL, LLLSAKMGLIPLVSLLAIGAG, LLACGAVGFHALAEGLALGVA, AAALIGFVGPISAIGSILAGI, GLDHVMVVACGGLLPSFWQVI, and VGMVLGLACAVVCLTFTRLVC.

The protein belongs to the ZIP transporter (TC 2.A.5) family. ZupT subfamily.

It localises to the membrane. Functionally, may transport zinc. The protein is Putative zinc transporter At3g08650 of Arabidopsis thaliana (Mouse-ear cress).